We begin with the raw amino-acid sequence, 119 residues long: UPF0342 protein GK0640 (119 aa).

This sequence belongs to the UPF0342 family.

The protein is UPF0342 protein GK0640 of Geobacillus kaustophilus (strain HTA426).